The primary structure comprises 531 residues: Putative UDP-glucuronosyltransferase ugt-46 (531 aa).

The signal sequence occupies residues 1–17 (MRLIFVLLATFVNAAFS). Asn-304 carries an N-linked (GlcNAc...) asparagine glycan. Residues 493–513 (VIIPVFWLSISLVIPTIFGWY) traverse the membrane as a helical segment.

The protein belongs to the UDP-glycosyltransferase family.

The protein resides in the membrane. The enzyme catalyses glucuronate acceptor + UDP-alpha-D-glucuronate = acceptor beta-D-glucuronoside + UDP + H(+). The sequence is that of Putative UDP-glucuronosyltransferase ugt-46 (ugt-46) from Caenorhabditis elegans.